The chain runs to 2113 residues: Unconventional myosin-VIIb (2113 aa).

The region spanning 65–760 is the Myosin motor domain; the sequence is QGVDDMIRLG…QDTVLEIRRS (696 aa). 158–165 contributes to the ATP binding site; that stretch reads GESGAGKT. Residues 637–659 are actin-binding; it reads LDQLMRILTNCQPYFVRCIKPNE. IQ domains follow at residues 745 to 765, 763 to 792, 786 to 815, 809 to 838, 832 to 861, and 855 to 884; these read IFLKDHQDTVLEIRRSQALDG, LDGAAIRIQRVLRGHKYRKEFLRQRRAAVT, QRRAAVTLQAGWRGYSQRKNFKLILVGFER, ILVGFERLQAIARSHLLMRQFQAMRQRIVQ, MRQRIVQLQARCRGYLVRQQVQAKRRAVVI, and KRRAVVIIQAHARGMVVRKSYWQQKSTGPQ. Ser-904 is subject to Phosphoserine. Residues 962 to 1578 form a mediates interaction with ANKS4B region; sequence EEEVDSLAEY…STQLLSLLAM (617 aa). The region spanning 989-1189 is the MyTH4 1 domain; the sequence is HIQKPLRYPL…PTWLELQAVK (201 aa). An FERM 1 domain is found at 1194–1503; the sequence is IPIQVILATG…GGLKERSVFA (310 aa). Thr-1339 carries the post-translational modification Phosphothreonine. Ser-1368 is subject to Phosphoserine. The interval 1497-2113 is mediates interaction with CDHR2, CDHR5 and USH1C; sequence KERSVFAMAL…GFRAPAPANP (617 aa). The region spanning 1498–1564 is the SH3 domain; sequence ERSVFAMALQ…PTACLYTIPS (67 aa). MyTH4 domains lie at 1641-1790 and 1790-1896; these read YSPE…KAAE and EQNV…LNVT. Ser-1642 is modified (phosphoserine). Positions 1796-2099 constitute an FERM 2 domain; the sequence is LHHEVYLPND…SYVQQLLNTV (304 aa).

This sequence belongs to the TRAFAC class myosin-kinesin ATPase superfamily. Myosin family. In terms of assembly, part of the IMAC/intermicrovillar adhesion complex/intermicrovillar tip-link complex composed of ANKS4B, MYO7B, USH1C, CDHR2 and CDHR5. Interacts with CDHR2. Interacts with CDHR5. Interacts with USH1C. Interacts with ANKS4B; requires initial interaction with USH1C. Interacts with CALML4; the interaction mediates the association of CALML4 with the IMAC/intermicrovillar adhesion complex. In terms of tissue distribution, expressed primarily in kidney and intestine. Detected in proximal tubule cells of the kidney and enterocytes of the intestine, specifically the distal tips of apical microvilli on these transporting epithelial cells (at protein level).

It is found in the cytoplasm. It localises to the cytoskeleton. Its subcellular location is the cell projection. The protein localises to the microvillus. In terms of biological role, myosins are actin-based motor molecules with ATPase activity. Their highly divergent tails are presumed to bind to membranous compartments, which would be moved relative to actin filaments. As part of the intermicrovillar adhesion complex/IMAC plays a role in epithelial brush border differentiation, controlling microvilli organization and length. May link the complex to the actin core bundle of microvilli. The polypeptide is Unconventional myosin-VIIb (Myo7b) (Mus musculus (Mouse)).